A 149-amino-acid polypeptide reads, in one-letter code: Transcriptional repressor NrdR (149 aa).

A zinc finger lies at 3-34 (CPFCSAVDTKVIDSRLVAEGHQVRRRRECLLC). An ATP-cone domain is found at 49 to 139 (PRVIKSNGSR…VYRSFEDIRE (91 aa)).

This sequence belongs to the NrdR family. The cofactor is Zn(2+).

Its function is as follows. Negatively regulates transcription of bacterial ribonucleotide reductase nrd genes and operons by binding to NrdR-boxes. This Aeromonas salmonicida (strain A449) protein is Transcriptional repressor NrdR.